A 470-amino-acid chain; its full sequence is Putative multidrug resistance protein MdtD (470 aa).

The Periplasmic portion of the chain corresponds to 1–11 (MTELPDNTRWQ). The helical transmembrane segment at 12 to 32 (LWIVALGFFMQSLDTTIVNTA) threads the bilayer. The Cytoplasmic portion of the chain corresponds to 33–48 (LPSMAKSLGESPLHMH). The chain crosses the membrane as a helical span at residues 49-69 (MVVVSYVLTVAVMLPASGWLA). At 70–76 (DKIGVRN) the chain is on the periplasmic side. The chain crosses the membrane as a helical span at residues 77-97 (IFFAAIVLFTLGSLFCALSGT). At 98–101 (LNQL) the chain is on the cytoplasmic side. The chain crosses the membrane as a helical span at residues 102–124 (VLARVLQGVGGAMMVPVGRLTVM). Over 125–137 (KIVPRAQYMAAMT) the chain is Periplasmic. The chain crosses the membrane as a helical span at residues 138–158 (FVTLPGQIGPLLGPALGGVLV). The Cytoplasmic segment spans residues 159-164 (EYASWH). A helical membrane pass occupies residues 165 to 185 (WIFLINIPVGIVGAMATFMLM). Over 186–196 (PNYTIETRRFD) the chain is Periplasmic. Residues 197–217 (LPGFLLLAIGMAVLTLALDGS) form a helical membrane-spanning segment. Residues 218–221 (KSMG) lie on the Cytoplasmic side of the membrane. Residues 222–242 (ISPWTLAGLAAGGAAAILLYL) form a helical membrane-spanning segment. At 243–262 (LHAKKNSGALFSLRLFCTPT) the chain is on the periplasmic side. A helical membrane pass occupies residues 263–283 (FSLGLLGSFAGRIGSGMLPFM). Residues 284–285 (TP) lie on the Cytoplasmic side of the membrane. Residues 286-306 (VFLQIGLGFSPFHAGLMMIPM) traverse the membrane as a helical segment. The Periplasmic portion of the chain corresponds to 307–341 (VLGSMGMKRIVVQIVNRFGYRRVLVATTLGLALVS). A helical membrane pass occupies residues 342 to 362 (LLFMSVALLGWYYLLPLVLLL). Residues 363-395 (QGMVNSARFSSMNTLTLKDLPDTLASSGNSLLS) lie on the Cytoplasmic side of the membrane. The chain crosses the membrane as a helical span at residues 396 to 416 (MIMQLSMSIGVTIAGMLLGMF). At 417-430 (GQQHIGIDSSATHH) the chain is on the periplasmic side. A helical membrane pass occupies residues 431-451 (VFMYTWLCMAVIIALPAIIFA). At 452–470 (RVPNDTQQNMVISRRKRSL) the chain is on the cytoplasmic side.

The protein belongs to the major facilitator superfamily. TCR/Tet family.

Its subcellular location is the cell inner membrane. In Salmonella paratyphi B (strain ATCC BAA-1250 / SPB7), this protein is Putative multidrug resistance protein MdtD.